Consider the following 235-residue polypeptide: MSTDHVSTHPDSPLHGNGIGSEAINLAAIRQEYTKGGLKEGDLPDNPLSLFNRWLHEAIDAQVDEPTAMLVGTVSPEGQPSTRTVLLKDLHDGKFIFYTNYESRKGTHLAKNPYISLSFVWHALERQVHIEGIASKVPAGESDTYFRQRPYKSRIGARISPQSRPLKSRMQLIRNFVAEAARWVGREVERPAHWGGYAVTPHRIEFWQGRANRLHDRFLYSLQPDGSWQKERLAP.

Substrate is bound by residues 30–33 (RQEY) and Lys88. FMN contacts are provided by residues 83 to 88 (RTVLLK), 98 to 99 (YT), Arg104, Lys105, and Gln127. Substrate-binding residues include Tyr145, Arg149, and Ser153. FMN is bound by residues 162-163 (QS) and Trp207. 213–215 (RLH) is a binding site for substrate. Position 217 (Arg217) interacts with FMN.

The protein belongs to the pyridoxamine 5'-phosphate oxidase family. In terms of assembly, homodimer. It depends on FMN as a cofactor.

The enzyme catalyses pyridoxamine 5'-phosphate + O2 + H2O = pyridoxal 5'-phosphate + H2O2 + NH4(+). It carries out the reaction pyridoxine 5'-phosphate + O2 = pyridoxal 5'-phosphate + H2O2. The protein operates within cofactor metabolism; pyridoxal 5'-phosphate salvage; pyridoxal 5'-phosphate from pyridoxamine 5'-phosphate: step 1/1. It participates in cofactor metabolism; pyridoxal 5'-phosphate salvage; pyridoxal 5'-phosphate from pyridoxine 5'-phosphate: step 1/1. In terms of biological role, catalyzes the oxidation of either pyridoxine 5'-phosphate (PNP) or pyridoxamine 5'-phosphate (PMP) into pyridoxal 5'-phosphate (PLP). The sequence is that of Pyridoxine/pyridoxamine 5'-phosphate oxidase from Bacteroides fragilis (strain YCH46).